An 837-amino-acid polypeptide reads, in one-letter code: Enterin neuropeptides (837 aa).

The first 25 residues, 1-25 (MAKHDVTVMTLLLVVCALHVFDAQG), serve as a signal peptide directing secretion. Positions 26-47 (TDVKLNDGFLRSGIMNIPFQRR) are excised as a propeptide. The residue at position 57 (Val-57) is a Valine amide. A propeptide spanning residues 61 to 134 (SGFQSPVSPS…ENKRFSKENE (74 aa)) is cleaved from the precursor. Val-146 bears the Valine amide mark. The propeptide occupies 150–178 (MDLSALEKELIAKLKAADLLSPLETEAPG). The residue at position 190 (Leu-190) is a Leucine amide. The propeptide occupies 194-201 (MPVDVFPR). The residue at position 211 (Val-211) is a Valine amide. A propeptide spanning residues 215-234 (SGNGENYFDDLDTFGDISQR) is cleaved from the precursor. Val-244 is modified (valine amide). Positions 248-266 (GNTDFSRNPLARLSQVQNR) are excised as a propeptide. Position 276 is a valine amide (Val-276). A propeptide spanning residues 280 to 285 (SVHNIV) is cleaved from the precursor. Position 297 is a valine amide (Val-297). The propeptide occupies 301–325 (DFEDASEGLDEEEGDIDGYSDDLDV). 18 positions are modified to valine amide: Val-336, Val-348, Val-360, Val-372, Val-384, Val-396, Val-408, Val-420, Val-432, Val-444, Val-456, Val-468, Val-480, Val-492, Val-504, Val-516, Val-528, and Val-540. Positions 544-595 (ELGEDEINFLKEVDAADISRQLAEEDEKEAMVSVDDKETLSNEEDASEDDFE) are excised as a propeptide. The segment at 567–594 (EEDEKEAMVSVDDKETLSNEEDASEDDF) is disordered. Positions 584-593 (SNEEDASEDD) are enriched in acidic residues. A Pyrrolidone carboxylic acid (Glu); in form ENl' modification is found at Glu-598. Valine amide is present on Val-606. Residues 610–627 (DEEGDMGVEMEEEMESEK) constitute a propeptide that is removed on maturation. Leu-637 carries the leucine amide modification. Pyrrolidone carboxylic acid is present on Gln-641. Val-649 bears the Valine amide mark. Pyrrolidone carboxylic acid is present on Gln-653. 2 positions are modified to valine amide: Val-661 and Val-673. Gln-677 is subject to Pyrrolidone carboxylic acid. Valine amide occurs at positions 685 and 697. Residue Gln-701 is modified to Pyrrolidone carboxylic acid. Position 709 is a valine amide (Val-709). Gln-713 is subject to Pyrrolidone carboxylic acid. Position 721 is a valine amide (Val-721). Position 725 is a pyrrolidone carboxylic acid (Gln-725). Val-733 is modified (valine amide). A propeptide spanning residues 734-837 (GKRSGAEDID…DSHIMATSST (104 aa)) is cleaved from the precursor. The interval 772–837 (GQPAAANEEE…DSHIMATSST (66 aa)) is disordered. The span at 778–791 (NEEELQQEAAEESE) shows a compositional bias: acidic residues.

In terms of tissue distribution, high expression in gut and CNS.

The protein localises to the secreted. Reduce interneurons B4/5 activity. May play a regulatory role in nonfeeding behaviors. This is Enterin neuropeptides (ENPP) from Aplysia californica (California sea hare).